The sequence spans 486 residues: Fructose dehydrogenase cytochrome subunit (486 aa).

The first 25 residues, 1-25 (MRYFRPLSATAMTTVLLLAGTNVRA), serve as a signal peptide directing secretion. Cytochrome c domains lie at 38 to 142 (PSIS…MTEV), 186 to 294 (DDWN…RSVP), and 330 to 423 (TKTT…LSHF). Positions 52, 55, 56, 201, 204, 205, 343, 346, and 347 each coordinate heme c. Residues 458–478 (LLGTGGILGAILVVAGLWWLI) traverse the membrane as a helical segment.

Heterotrimer composed of FdhL, FdhS and FdhC. In terms of processing, binds 3 heme c groups covalently per subunit.

It localises to the cell membrane. Cytochrome subunit of fructose dehydrogenase, an enzyme that catalyzes the oxidation of D-fructose to produce 5-keto-D-fructose. In the complex, mediates both the electron transfer to ubiquinone and the anchoring of the complex to the membrane. This is Fructose dehydrogenase cytochrome subunit (fdhC) from Gluconobacter japonicus.